The sequence spans 212 residues: External core antigen (212 aa).

An N-terminal signal peptide occupies residues 1–19 (MQLFHLCLIISCSCPTVQA). An HBEAG region spans residues 25–27 (GWL). The tract at residues 165 to 212 (NAPILSTLPETTVVRRRGRSPRRRTPSPRRRRSQSPRRRRSQSRESQC) is disordered. A compositionally biased stretch (basic residues) spans 178–205 (VRRRGRSPRRRTPSPRRRRSQSPRRRRS). Residues 184-190 (SPRRRTP) form a 1; half-length repeat. Residues 184–206 (SPRRRTPSPRRRRSQSPRRRRSQ) form a 3 X 8 AA repeats of S-P-R-R-R-R-S-Q region. Positions 184–212 (SPRRRTPSPRRRRSQSPRRRRSQSRESQC) are excised as a propeptide. 2 tandem repeats follow at residues 191-198 (SPRRRRSQ) and 199-206 (SPRRRRSQ).

Belongs to the orthohepadnavirus precore antigen family. As to quaternary structure, homodimerizes. In terms of processing, phosphorylated. Post-translationally, cleaved by host furin.

It localises to the secreted. The protein localises to the host nucleus. May regulate immune response to the intracellular capsid in acting as a T-cell tolerogen, by having an immunoregulatory effect which prevents destruction of infected cells by cytotoxic T-cells. This immune regulation may predispose to chronicity during perinatal infections and prevent severe liver injury during adult infections. In Homo sapiens (Human), this protein is External core antigen.